We begin with the raw amino-acid sequence, 657 residues long: UvrABC system protein B (657 aa).

The Helicase ATP-binding domain maps to 25–182; the sequence is KSIKKGNEFQ…KKLIEIQYER (158 aa). 38–45 serves as a coordination point for ATP; the sequence is GVTGSGKT. The Beta-hairpin motif lies at 91–114; that stretch reads YYDYYQPEAYVPQTDTFIEKDASI. The region spanning 429–595 is the Helicase C-terminal domain; that stretch reads QIDDLYTEIQ…TINKEVRDLI (167 aa). The UVR domain occupies 621–656; it reads KKLIKEYTEEMMLAAKNLQFERAAQLRDEIEELKGK.

Belongs to the UvrB family. Forms a heterotetramer with UvrA during the search for lesions. Interacts with UvrC in an incision complex.

The protein resides in the cytoplasm. In terms of biological role, the UvrABC repair system catalyzes the recognition and processing of DNA lesions. A damage recognition complex composed of 2 UvrA and 2 UvrB subunits scans DNA for abnormalities. Upon binding of the UvrA(2)B(2) complex to a putative damaged site, the DNA wraps around one UvrB monomer. DNA wrap is dependent on ATP binding by UvrB and probably causes local melting of the DNA helix, facilitating insertion of UvrB beta-hairpin between the DNA strands. Then UvrB probes one DNA strand for the presence of a lesion. If a lesion is found the UvrA subunits dissociate and the UvrB-DNA preincision complex is formed. This complex is subsequently bound by UvrC and the second UvrB is released. If no lesion is found, the DNA wraps around the other UvrB subunit that will check the other stand for damage. The sequence is that of UvrABC system protein B from Clostridium botulinum (strain Alaska E43 / Type E3).